The chain runs to 2352 residues: Cell wall alpha-1,3-glucan synthase mok12 (2352 aa).

Residues 1786-1813 (SNDFGIREVPLSDANQSSQADSTSIDRY) are disordered. Residues 1798-1813 (DANQSSQADSTSIDRY) are compositionally biased toward polar residues.

This sequence belongs to the glycosyltransferase group 1 family.

It carries out the reaction [(1-&gt;3)-alpha-D-glucosyl](n) + UDP-alpha-D-glucose = [(1-&gt;3)-alpha-D-glucosyl](n+1) + UDP + H(+). This Schizosaccharomyces pombe (strain 972 / ATCC 24843) (Fission yeast) protein is Cell wall alpha-1,3-glucan synthase mok12 (mok12).